A 95-amino-acid chain; its full sequence is Aspartyl/glutamyl-tRNA(Asn/Gln) amidotransferase subunit C (95 aa).

It belongs to the GatC family. In terms of assembly, heterotrimer of A, B and C subunits.

The enzyme catalyses L-glutamyl-tRNA(Gln) + L-glutamine + ATP + H2O = L-glutaminyl-tRNA(Gln) + L-glutamate + ADP + phosphate + H(+). It carries out the reaction L-aspartyl-tRNA(Asn) + L-glutamine + ATP + H2O = L-asparaginyl-tRNA(Asn) + L-glutamate + ADP + phosphate + 2 H(+). Allows the formation of correctly charged Asn-tRNA(Asn) or Gln-tRNA(Gln) through the transamidation of misacylated Asp-tRNA(Asn) or Glu-tRNA(Gln) in organisms which lack either or both of asparaginyl-tRNA or glutaminyl-tRNA synthetases. The reaction takes place in the presence of glutamine and ATP through an activated phospho-Asp-tRNA(Asn) or phospho-Glu-tRNA(Gln). The polypeptide is Aspartyl/glutamyl-tRNA(Asn/Gln) amidotransferase subunit C (Campylobacter fetus subsp. fetus (strain 82-40)).